A 201-amino-acid polypeptide reads, in one-letter code: Protease (201 aa).

Active-site residues include His-53, Asp-70, and Cys-121.

Belongs to the peptidase C5 family. As to quaternary structure, interacts with protease cofactor pVI-C; this interaction is necessary for protease activation.

It localises to the virion. Its subcellular location is the host nucleus. It catalyses the reaction Cleaves proteins of the adenovirus and its host cell at two consensus sites: -Yaa-Xaa-Gly-Gly-|-Xaa- and -Yaa-Xaa-Gly-Xaa-|-Gly- (in which Yaa is Met, Ile or Leu, and Xaa is any amino acid).. Requires DNA and protease cofactor for maximal activation. Inside nascent virions, becomes partially activated by binding to the viral DNA, allowing it to cleave the cofactor that binds to the protease and fully activates it. Actin, like the viral protease cofactor, seems to act as a cofactor in the cleavage of cytokeratin 18 and of actin itself. Its function is as follows. Cleaves viral precursor proteins (pTP, pIIIa, pVI, pVII, pVIII, and pX) inside newly assembled particles giving rise to mature virions. Protease complexed to its cofactor slides along the viral DNA to specifically locate and cleave the viral precursors. Mature virions have a weakened organization compared to the unmature virions, thereby facilitating subsequent uncoating. Without maturation, the particle lacks infectivity and is unable to uncoat. Late in adenovirus infection, in the cytoplasm, may participate in the cytoskeleton destruction. Cleaves host cell cytoskeletal keratins K7 and K18. This chain is Protease, found in Equine adenovirus B serotype 2 (EAdV-2).